A 333-amino-acid polypeptide reads, in one-letter code: MVREKIRVSTRTLKWKCVESRADSKRLYYGRFILSPLMKGQGDTIGIAMRKALLGEIEGTCITRAKSEKIPHEYSTIVGIQESVHEILMNLKEIVLRSNLYGTRDASICVKGPGCVTAQDIILPPSVEIVDNTQHIANLMEPINLCIELKIERNRGYHIQTPNNFQDASYPMDAIFMPVRNVNHSIHSYVNGNEKQEILFLEIWTNGSLTPKEALHEASRNLIDLFIPFLHAEEEKENFHLKNNKKKVTLPLFTFHEKLAKLRKKKKEIALKYIFIDQSELPPRIYNCLKRCNIHTLFDLLNNSPDELMKIKHFRIEDVKHILDILEMEKNFA.

The segment at 1-233 (MVREKIRVST…DLFIPFLHAE (233 aa)) is alpha N-terminal domain (alpha-NTD). The alpha C-terminal domain (alpha-CTD) stretch occupies residues 269-333 (IALKYIFIDQ…DILEMEKNFA (65 aa)).

Belongs to the RNA polymerase alpha chain family. As to quaternary structure, in plastids the minimal PEP RNA polymerase catalytic core is composed of four subunits: alpha, beta, beta', and beta''. When a (nuclear-encoded) sigma factor is associated with the core the holoenzyme is formed, which can initiate transcription.

The protein resides in the plastid. It localises to the chloroplast. It catalyses the reaction RNA(n) + a ribonucleoside 5'-triphosphate = RNA(n+1) + diphosphate. DNA-dependent RNA polymerase catalyzes the transcription of DNA into RNA using the four ribonucleoside triphosphates as substrates. This is DNA-directed RNA polymerase subunit alpha from Cucumis sativus (Cucumber).